The chain runs to 78 residues: MDVMQRYVSPVNPAVFPHLATVLLVIGTFFTAWFFIFVVSRKSSKESTLIKELLISLCASIFLGFGIVFLLLTVGIYV.

Residues 1–18 lie on the Cytoplasmic side of the membrane; sequence MDVMQRYVSPVNPAVFPH. A helical membrane pass occupies residues 19 to 39; sequence LATVLLVIGTFFTAWFFIFVV. Topologically, residues 40-53 are cytoplasmic; the sequence is SRKSSKESTLIKEL. The chain crosses the membrane as a helical span at residues 54–74; it reads LISLCASIFLGFGIVFLLLTV. Topologically, residues 75–78 are perinuclear space; the sequence is GIYV.

This sequence belongs to the OST5 family. In terms of assembly, homodimer. Component of the oligosaccharyltransferase (OST) complex. Interacts with klar and Msp300, components of LINC complex.

It localises to the nucleus outer membrane. Its subcellular location is the cytoplasm. It is found in the endoplasmic reticulum membrane. Functionally, subunit of the oligosaccharyl transferase (OST) complex that catalyzes the initial transfer of a defined glycan (Glc(3)Man(9)GlcNAc(2) in eukaryotes) from the lipid carrier dolichol-pyrophosphate to an asparagine residue within an Asn-X-Ser/Thr consensus motif in nascent polypeptide chains, the first step in protein N-glycosylation. N-glycosylation occurs cotranslationally and the complex associates with the Sec61 complex at the channel-forming translocon complex that mediates protein translocation across the endoplasmic reticulum (ER). All subunits are required for a maximal enzyme activity. In addition may regulates nuclear envelope (NE) architecture and nuclear positioning through the linker of nucleoskeleton and cytoskeleton (LINC)-dependent and -independent mechanisms. This chain is Transmembrane protein 258, found in Drosophila melanogaster (Fruit fly).